The sequence spans 299 residues: ATP phosphoribosyltransferase (299 aa).

It belongs to the ATP phosphoribosyltransferase family. Long subfamily. Equilibrium between an active dimeric form, an inactive hexameric form and higher aggregates. Interconversion between the various forms is largely reversible and is influenced by the natural substrates and inhibitors of the enzyme. Mg(2+) serves as cofactor.

It localises to the cytoplasm. The catalysed reaction is 1-(5-phospho-beta-D-ribosyl)-ATP + diphosphate = 5-phospho-alpha-D-ribose 1-diphosphate + ATP. The protein operates within amino-acid biosynthesis; L-histidine biosynthesis; L-histidine from 5-phospho-alpha-D-ribose 1-diphosphate: step 1/9. Its activity is regulated as follows. Feedback inhibited by histidine. Its function is as follows. Catalyzes the condensation of ATP and 5-phosphoribose 1-diphosphate to form N'-(5'-phosphoribosyl)-ATP (PR-ATP). Has a crucial role in the pathway because the rate of histidine biosynthesis seems to be controlled primarily by regulation of HisG enzymatic activity. This Salmonella agona (strain SL483) protein is ATP phosphoribosyltransferase.